The following is a 489-amino-acid chain: Inositol-pentakisphosphate 2-kinase (489 aa).

The short motif at 136-140 (EIKPK) is the EXKPK motif element.

Belongs to the IPK1 type 2 family. In terms of tissue distribution, in brain, it is expressed throughout the hippocampus (CA1, CA2, CA3 and dentate gyrus), inner layers of the cerebral cortex, and Purkinje cells of the cerebellum. In heart, it is expressed in cardiomyocytes but not in interstitial cells, blood vessels, or valves. Also expressed in testis.

It localises to the cytoplasm. The protein localises to the nucleus. The enzyme catalyses 1D-myo-inositol 1,3,4,5,6-pentakisphosphate + ATP = 1D-myo-inositol hexakisphosphate + ADP + H(+). Phosphorylates Ins(1,3,4,5,6)P5 at position 2 to form Ins(1,2,3,4,5,6)P6 (InsP6 or phytate). InsP6 is involved in many processes such as mRNA export, non-homologous end-joining, endocytosis, ion channel regulation. It also protects cells from TNF-alpha-induced apoptosis. The sequence is that of Inositol-pentakisphosphate 2-kinase (Ippk) from Mus musculus (Mouse).